Consider the following 309-residue polypeptide: Homoserine kinase (309 aa).

Position 91 to 101 (91 to 101 (PIGSGLGSSAC)) interacts with ATP.

The protein belongs to the GHMP kinase family. Homoserine kinase subfamily.

The protein resides in the cytoplasm. It carries out the reaction L-homoserine + ATP = O-phospho-L-homoserine + ADP + H(+). It participates in amino-acid biosynthesis; L-threonine biosynthesis; L-threonine from L-aspartate: step 4/5. Functionally, catalyzes the ATP-dependent phosphorylation of L-homoserine to L-homoserine phosphate. This Pectobacterium carotovorum subsp. carotovorum (strain PC1) protein is Homoserine kinase.